The sequence spans 460 residues: 3-ketoacyl-CoA synthase 7 (460 aa).

A helical transmembrane segment spans residues 21–41; sequence FHQFLVASACVLIAVFGYYFF. Positions 38 to 328 constitute an FAE domain; it reads YYFFKPRCII…YIISFIQRKW (291 aa). Residues Cys-183, His-262, His-345, His-349, and Asn-382 contribute to the active site.

This sequence belongs to the thiolase-like superfamily. Chalcone/stilbene synthases family. As to expression, expressed in flowers.

It localises to the membrane. It catalyses the reaction a very-long-chain acyl-CoA + malonyl-CoA + H(+) = a very-long-chain 3-oxoacyl-CoA + CO2 + CoA. The protein operates within lipid metabolism; fatty acid biosynthesis. The sequence is that of 3-ketoacyl-CoA synthase 7 from Arabidopsis thaliana (Mouse-ear cress).